The sequence spans 159 residues: Ribosomal RNA large subunit methyltransferase H (159 aa).

S-adenosyl-L-methionine-binding positions include leucine 76, glycine 108, and 127–132 (FSKMTF).

The protein belongs to the RNA methyltransferase RlmH family. Homodimer.

Its subcellular location is the cytoplasm. The catalysed reaction is pseudouridine(1915) in 23S rRNA + S-adenosyl-L-methionine = N(3)-methylpseudouridine(1915) in 23S rRNA + S-adenosyl-L-homocysteine + H(+). Functionally, specifically methylates the pseudouridine at position 1915 (m3Psi1915) in 23S rRNA. In Lachnoclostridium phytofermentans (strain ATCC 700394 / DSM 18823 / ISDg) (Clostridium phytofermentans), this protein is Ribosomal RNA large subunit methyltransferase H.